We begin with the raw amino-acid sequence, 496 residues long: tRNA-2-methylthio-N(6)-dimethylallyladenosine synthase (496 aa).

Positions lysine 43–glutamine 160 constitute an MTTase N-terminal domain. [4Fe-4S] cluster is bound by residues cysteine 52, cysteine 89, cysteine 123, cysteine 204, cysteine 208, and cysteine 211. One can recognise a Radical SAM core domain in the interval arginine 190–alanine 422. In terms of domain architecture, TRAM spans histidine 425–alanine 493.

This sequence belongs to the methylthiotransferase family. MiaB subfamily. As to quaternary structure, monomer. It depends on [4Fe-4S] cluster as a cofactor.

It is found in the cytoplasm. The catalysed reaction is N(6)-dimethylallyladenosine(37) in tRNA + (sulfur carrier)-SH + AH2 + 2 S-adenosyl-L-methionine = 2-methylsulfanyl-N(6)-dimethylallyladenosine(37) in tRNA + (sulfur carrier)-H + 5'-deoxyadenosine + L-methionine + A + S-adenosyl-L-homocysteine + 2 H(+). Its function is as follows. Catalyzes the methylthiolation of N6-(dimethylallyl)adenosine (i(6)A), leading to the formation of 2-methylthio-N6-(dimethylallyl)adenosine (ms(2)i(6)A) at position 37 in tRNAs that read codons beginning with uridine. This chain is tRNA-2-methylthio-N(6)-dimethylallyladenosine synthase, found in Psychrobacter arcticus (strain DSM 17307 / VKM B-2377 / 273-4).